The primary structure comprises 201 residues: Cold shock domain-containing protein 4 (201 aa).

Serine 2 carries the post-translational modification N-acetylserine. A CSD domain is found at 14–81; sequence RRKGTVKWFD…RPKAIEVSGP (68 aa). Residues 66 to 109 are disordered; it reads EVDNSGRPKAIEVSGPDGAPVQGNSGGGGSSGGRGGFGGGGGRG. Over residues 89–109 the composition is skewed to gly residues; sequence NSGGGGSSGGRGGFGGGGGRG. 2 consecutive CCHC-type zinc fingers follow at residues 136 to 153 and 180 to 197; these read NSCFKCGEPGHMARECSQ and LSCYSCGESGHFARDCTS.

The protein belongs to the cold shock protein (CSP) family. Mostly expressed in shoot apices and siliques, and, to a lower extent, in roots, cotyledons, stems, shoots, leaves, floral buds and flowers. Present in shoot apical meristems and siliques (at protein level). Very low levels are observed in cv. Landsberg erecta compared to cv. Columbia.

The protein resides in the cytoplasm. It localises to the nucleus. Its subcellular location is the nucleolus. Functionally, chaperone that binds to and unwinds RNA and both single-stranded DNA and double-stranded DNA (ssDNA and dsDNA DNA). Regulates the flowering transition and flower and seed development, particularly at late stages of embryo development, through regulation of gene expression (including MEA, FIS2, AP1, CAL, AG and SHP2). The sequence is that of Cold shock domain-containing protein 4 (CSP4) from Arabidopsis thaliana (Mouse-ear cress).